A 693-amino-acid polypeptide reads, in one-letter code: Phenoloxidase subunit 2 (693 aa).

Positions 1-51 are excised as a propeptide; the sequence is MADVFESLELLFDRPNEPLITPKGENNSVFQLTEQFLTEDYANNGIELNNR. 2 N-linked (GlcNAc...) asparagine glycosylation sites follow: N26 and N64. Residues H213, H217, and H243 each coordinate Cu cation. E351 functions as the Proton acceptor in the catalytic mechanism. H366, H370, and H406 together coordinate Cu cation. N-linked (GlcNAc...) asparagine glycosylation is found at N462 and N494. Cystine bridges form between C583/C627 and C585/C634. A glycan (N-linked (GlcNAc...) asparagine) is linked at N680.

Heterodimer. It depends on Cu(2+) as a cofactor. The N-terminus is blocked. Synthesized by hemocytes and released into the hemolymph plasma.

It localises to the secreted. It carries out the reaction 2 L-dopa + O2 = 2 L-dopaquinone + 2 H2O. The enzyme catalyses L-tyrosine + O2 = L-dopaquinone + H2O. Its function is as follows. This is a copper-containing oxidase that functions in the formation of pigments such as melanins and other polyphenolic compounds. Catalyzes the rate-limiting conversions of tyrosine to DOPA, DOPA to DOPA-quinone and possibly 5,6 dihydroxyindole to indole-5'6 quinone. In Bombyx mori (Silk moth), this protein is Phenoloxidase subunit 2.